The following is a 207-amino-acid chain: MNPSRIRIKMCGMTRSEDIQYAIDLGVDAIGLIFYPKSVRNVSLEKARIIVNNIPPFVDIVAVLVNPEQSFVQLIINEIPVQLLQFHGEESSEFCRQFNKPFIKAIHPKTAIQIQSAVDEFFDASAILLDTPSDKERGGTGLTFDWNIIPENLSKPYILAGGLNESNILEAITMCHPYAVDVCSGIEASPGVKDHLKMSRFIKAIWG.

This sequence belongs to the TrpF family.

The enzyme catalyses N-(5-phospho-beta-D-ribosyl)anthranilate = 1-(2-carboxyphenylamino)-1-deoxy-D-ribulose 5-phosphate. Its pathway is amino-acid biosynthesis; L-tryptophan biosynthesis; L-tryptophan from chorismate: step 3/5. The sequence is that of N-(5'-phosphoribosyl)anthranilate isomerase from Legionella pneumophila subsp. pneumophila (strain Philadelphia 1 / ATCC 33152 / DSM 7513).